A 713-amino-acid chain; its full sequence is F-box/WD repeat-containing protein 7 (713 aa).

Residues 1–150 are disordered; that stretch reads MNQELLSVGS…DEHTHNSNVT (150 aa). S26 carries the phosphoserine modification. The segment covering 46–55 has biased composition (basic and acidic residues); sequence RHQEEEHTAR. Residues 69–84 are compositionally biased toward polar residues; it reads QNDSQQGQVEENNNRF. Over residues 87–135 the composition is skewed to acidic residues; the sequence is VDEDSSGNQEEQEEDEEHAGEQEEEEEEEEEEEEEEEMDQESDDFDQSD. Positions 94–136 form a coiled coil; sequence NQEEQEEDEEHAGEQEEEEEEEEEEEEEEEMDQESDDFDQSDD. Residues 136 to 145 show a composition bias toward basic and acidic residues; the sequence is DSSREDEHTH. Position 211 is a phosphothreonine (T211). At S233 the chain carries Phosphoserine. Positions 284–330 constitute an F-box domain; that stretch reads RDFISLLPKELALYVLSFLEPKDLLQAAQTCRYWRILAEDNLLWREK. WD repeat units lie at residues 384–424, 426–462, 465–504, 506–542, 545–584, 586–624, and 628–665; these read GHDD…RTLV, HTGGVWSSQMRDNIIISGSTDRTLKVWNAETGECIHT, GHTSTVRCMHLHEKRVVSGSRDATLRVWDIETGQCLHVLM, HVAAVRCVQYDGRRVVSGAYDFMVKVWDPETETCLHT, GHTNRVYSLQFDGIHVVSGSLDTSIRVWDVETGNCIHTLT, HQSLTSGMELKDNILVSGNADSTVKIWDIKTGQCLQTLQ, and KHQSAVTCLQFNKNFVITSSDDGTVKLWDLKTGEFIRN.

In terms of assembly, homodimer; homodimerization plays a role in substrate binding and/or ubiquitination and degradation. Component of the SCF(FBXW7) complex consisting of CUL1, RBX1, SKP1 and FBXW7. Interacts (via F-box domain) with SKP1. Interacts (via F-box domain) with pseudophosphatase STYX; the interaction is direct and prevents FBXW7 interaction with SKP1. Interacts with cyclin-E (CCNE1 or CCNE2). Interacts with PSEN1. Forms a trimeric complex with NOTCH1 and SGK1. Interacts with NOTCH1 intracellular domain/NICD and NOTCH4 intracellular domain/NICD. Interacts with NOTCH2 intracellular domain (N2ICD). Interacts with MYC (when phosphorylated). Interacts with USP28, counteracting ubiquitination of MYC. Interacts (when phosphorylated at Thr-211) with PIN1, disrupting FBXW7 dimerization and promoting FBXW7 autoubiquitination and degradation. Interacts with UBE2QL1. Interacts with FAM83D; promotes FBXW7 degradation. Interacts with MYCN; FBXW7 competes with AURKA for binding to unphosphorylated MYCN but not for binding to phosphorylated MYCN. Interacts with JUN. Found in a complex with JUN and PRR7. Interacts with JUN and PRR7; the interaction inhibits ubiquitination-mediated JUN degradation, promoting its phosphorylation and transcriptional activity. Interacts with NFE2L1. Interacts with NR1D1. Interacts with RICTOR; mediates RICTOR ubiquitination and degradation. Phosphorylation at Thr-211 promotes interaction with PIN1, leading to disrupt FBXW7 dimerization and promoting FBXW7 autoubiquitination and degradation. Phosphorylated by ATM at Ser-26 in response to DNA damage, promoting recruitment to DNA damage sites and 'Lys-63'-linked ubiquitination of phosphorylated XRCC4. Post-translationally, ubiquitinated: autoubiquitinates following phosphorylation at Thr-211 and subsequent interaction with PIN1. Ubiquitination leads to its degradation.

Its subcellular location is the nucleus. The protein localises to the nucleoplasm. It is found in the chromosome. The protein operates within protein modification; protein ubiquitination. In terms of biological role, substrate recognition component of a SCF (SKP1-CUL1-F-box protein) E3 ubiquitin-protein ligase complex which mediates the ubiquitination and subsequent proteasomal degradation of target proteins. Recognizes and binds phosphorylated sites/phosphodegrons within target proteins and thereafter brings them to the SCF complex for ubiquitination. Identified substrates include cyclin-E (CCNE1 or CCNE2), JUN, MYC, NOTCH1 released notch intracellular domain (NICD), NOTCH2, MCL1, MLST8, RICTOR and probably PSEN1. Acts as a negative regulator of JNK signaling by binding to phosphorylated JUN and promoting its ubiquitination and subsequent degradation. SCF(FBXW7) complex mediates the ubiquitination and subsequent degradation of NFE2L1. Involved in bone homeostasis and negative regulation of osteoclast differentiation. Regulates the amplitude of the cyclic expression of hepatic core clock genes and genes involved in lipid and glucose metabolism via ubiquitination and proteasomal degradation of their transcriptional repressor NR1D1; CDK1-dependent phosphorylation of NR1D1 is necessary for SCF(FBXW7)-mediated ubiquitination. Also able to promote 'Lys-63'-linked ubiquitination in response to DNA damage. The SCF(FBXW7) complex facilitates double-strand break repair following phosphorylation by ATM: phosphorylation promotes localization to sites of double-strand breaks and 'Lys-63'-linked ubiquitination of phosphorylated XRCC4, enhancing DNA non-homologous end joining. The sequence is that of F-box/WD repeat-containing protein 7 from Rattus norvegicus (Rat).